The sequence spans 38 residues: Large ribosomal subunit protein bL36 (38 aa).

It belongs to the bacterial ribosomal protein bL36 family.

The chain is Large ribosomal subunit protein bL36 from Hahella chejuensis (strain KCTC 2396).